Reading from the N-terminus, the 521-residue chain is Phospholipase C B (521 aa).

The segment at residues 1–39 (MGSEHPVDGMTRRQFFAKAAAATTAGAFMSLAGPIIEKA) is a signal peptide (tat-type signal). Residues 501–521 (FPQSMPTQETAPTRGIPSGLC) form a disordered region.

It belongs to the bacterial phospholipase C family. Predicted to be exported by the Tat system. The position of the signal peptide cleavage has not been experimentally proven.

Its subcellular location is the secreted. It is found in the cell wall. The catalysed reaction is a 1,2-diacyl-sn-glycero-3-phosphocholine + H2O = phosphocholine + a 1,2-diacyl-sn-glycerol + H(+). Involved in virulence. Induces cytotoxic effects on mouse macrophage cell lines, via direct or indirect enzymatic hydrolysis of cell membrane phospholipids. Hydrolyzes phosphatidylcholine. This Mycobacterium tuberculosis (strain CDC 1551 / Oshkosh) protein is Phospholipase C B.